The primary structure comprises 637 residues: 1-deoxy-D-xylulose-5-phosphate synthase (637 aa).

Thiamine diphosphate-binding positions include His-73 and 113–115; that span reads SHA. Asp-145 provides a ligand contact to Mg(2+). Residues 146–147, Asn-175, Tyr-286, and Glu-367 contribute to the thiamine diphosphate site; that span reads GA. Asn-175 lines the Mg(2+) pocket.

It belongs to the transketolase family. DXPS subfamily. Homodimer. Requires Mg(2+) as cofactor. The cofactor is thiamine diphosphate.

The catalysed reaction is D-glyceraldehyde 3-phosphate + pyruvate + H(+) = 1-deoxy-D-xylulose 5-phosphate + CO2. Its pathway is metabolic intermediate biosynthesis; 1-deoxy-D-xylulose 5-phosphate biosynthesis; 1-deoxy-D-xylulose 5-phosphate from D-glyceraldehyde 3-phosphate and pyruvate: step 1/1. Functionally, catalyzes the acyloin condensation reaction between C atoms 2 and 3 of pyruvate and glyceraldehyde 3-phosphate to yield 1-deoxy-D-xylulose-5-phosphate (DXP). This chain is 1-deoxy-D-xylulose-5-phosphate synthase, found in Thermobifida fusca (strain YX).